The primary structure comprises 297 residues: Acetaldehyde dehydrogenase (297 aa).

An NAD(+)-binding site is contributed by 15-18; it reads SGSI. C130 serves as the catalytic Acyl-thioester intermediate. NAD(+) is bound by residues 162–170 and N272; that span reads SAGIATREN.

The protein belongs to the acetaldehyde dehydrogenase family.

It carries out the reaction acetaldehyde + NAD(+) + CoA = acetyl-CoA + NADH + H(+). The sequence is that of Acetaldehyde dehydrogenase (mhpF) from Burkholderia pseudomallei (strain K96243).